Consider the following 24-residue polypeptide: 33.0 kDa cold shock protein (24 aa).

It belongs to the thaumatin family. Homooligomer; disulfide-linked. Glycosylated.

It is found in the secreted. It localises to the extracellular space. The protein resides in the apoplast. In Arachis hypogaea (Peanut), this protein is 33.0 kDa cold shock protein.